The chain runs to 362 residues: Atypical chemokine receptor 3 (362 aa).

The Extracellular segment spans residues 1-47 (MDVHLFDYVEPGNYSDINWPCNSSDCIVVDTVQCPAMPNKNVLLYTL). N13 and N22 each carry an N-linked (GlcNAc...) asparagine glycan. A helical transmembrane segment spans residues 48–68 (SFIYIFIFVIGMIANSVVVWV). The Cytoplasmic segment spans residues 69–81 (NIQAKTTGYDTHC). Residues 82 to 102 (YILNLAIADLWVVITIPVWVV) traverse the membrane as a helical segment. Residues 103–118 (SLVQHNQWPMGELTCK) are Extracellular-facing. C117 and C196 are oxidised to a cystine. Residues 119 to 139 (ITHLIFSINLFGSIFFLACMS) form a helical membrane-spanning segment. The Cytoplasmic segment spans residues 140-162 (VDRYLSITYFTSTSSYKKKMVRR). A helical membrane pass occupies residues 163-183 (VVCVLVWLLAFFVSLPDTYYL). Residues 184-213 (KTVTSASNNETYCRSFYPEHSIKEWLIGME) are Extracellular-facing. The helical transmembrane segment at 214–234 (LVSVILGFAVPFTIIAIFYFL) threads the bilayer. The Cytoplasmic portion of the chain corresponds to 235–252 (LARAMSASGDQEKHSSRK). Residues 253–273 (IIFSYVVVFLVCWLPYHFVVL) traverse the membrane as a helical segment. The Extracellular segment spans residues 274-296 (LDIFSILHYIPFTCQLENVLFTA). The helical transmembrane segment at 297 to 319 (LHVTQCLSLVHCCVNPVLYSFIN) threads the bilayer. Topologically, residues 320 to 362 (RNYRYELMKAFIFKYSAKTGLTKLIDASRVSETEYSALEQNTK) are cytoplasmic. The tract at residues 324–362 (YELMKAFIFKYSAKTGLTKLIDASRVSETEYSALEQNTK) is C-terminal cytoplasmic tail. Residues S347, S350, and S355 each carry the phosphoserine modification.

It belongs to the G-protein coupled receptor 1 family. Atypical chemokine receptor subfamily. In terms of assembly, homodimer. Can form heterodimers with CXCR4; heterodimerization may regulate CXCR4 signaling activity. Interacts with ARRB1 and ARRB2. In terms of processing, the Ser/Thr residues in the C-terminal cytoplasmic tail may be phosphorylated. Ubiquitinated at the Lys residues in its C-terminal cytoplasmic tail and is essential for correct trafficking from and to the cell membrane. Deubiquitinated by CXCL12-stimulation in a reversible manner. In terms of tissue distribution, expressed in vascular smooth muscle cells (at protein level). In brain, expressed in blood vessels, pyramidal cells in hippocampal subfield CA3, mature dentate gyrus granule cells, ventricle walls, olfactory bulb, accumbens shell, supraoptic, lateroanterior and ventromedial hypothalamic nuclei, medial region of thalamus, and motor nuclei, central gray and raphe magnus nucleus of brain stem. Detected in primary neurons, GABAergic neurons, astrocytes, cerebral cortex, ventral striatum and choroid plexus. Not detected in mesencephalon.

The protein localises to the cell membrane. Its subcellular location is the early endosome. It localises to the recycling endosome. Functionally, atypical chemokine receptor that controls chemokine levels and localization via high-affinity chemokine binding that is uncoupled from classic ligand-driven signal transduction cascades, resulting instead in chemokine sequestration, degradation, or transcytosis. Also known as interceptor (internalizing receptor) or chemokine-scavenging receptor or chemokine decoy receptor. Acts as a receptor for chemokines CXCL11 and CXCL12/SDF1. Chemokine binding does not activate G-protein-mediated signal transduction but instead induces beta-arrestin recruitment, leading to ligand internalization and activation of MAPK signaling pathway. Required for regulation of CXCR4 protein levels in migrating interneurons, thereby adapting their chemokine responsiveness. In glioma cells, transduces signals via MEK/ERK pathway, mediating resistance to apoptosis. Promotes cell growth and survival. Not involved in cell migration, adhesion or proliferation of normal hematopoietic progenitors but activated by CXCL11 in malignant hemapoietic cells, leading to phosphorylation of ERK1/2 (MAPK3/MAPK1) and enhanced cell adhesion and migration. Plays a regulatory role in CXCR4-mediated activation of cell surface integrins by CXCL12. Required for heart valve development. Atypical chemokine receptor that controls chemokine levels and localization via high-affinity chemokine binding that is uncoupled from classic ligand-driven signal transduction cascades, resulting instead in chemokine sequestration, degradation, or transcytosis. Also known as interceptor (internalizing receptor) or chemokine-scavenging receptor or chemokine decoy receptor. Acts as a receptor for chemokines CXCL11 and CXCL12/SDF1. Chemokine binding does not activate G-protein-mediated signal transduction but instead induces beta-arrestin recruitment, leading to ligand internalization and activation of MAPK signaling pathway. Required for regulation of CXCR4 protein levels in migrating interneurons, thereby adapting their chemokine responsiveness. In glioma cells, transduces signals via MEK/ERK pathway, mediating resistance to apoptosis. Promotes cell growth and survival. Not involved in cell migration, adhesion or proliferation of normal hematopoietic progenitors but activated by CXCL11 in malignant hemapoietic cells, leading to phosphorylation of ERK1/2 (MAPK3/MAPK1) and enhanced cell adhesion and migration. Plays a regulatory role in CXCR4-mediated activation of cell surface integrins by CXCL12. Required for heart valve development. Regulates axon guidance in the oculomotor system through the regulation of CXCL12 levels. This is Atypical chemokine receptor 3 from Rattus norvegicus (Rat).